The sequence spans 250 residues: Indole-3-glycerol phosphate synthase (250 aa).

Belongs to the TrpC family.

It carries out the reaction 1-(2-carboxyphenylamino)-1-deoxy-D-ribulose 5-phosphate + H(+) = (1S,2R)-1-C-(indol-3-yl)glycerol 3-phosphate + CO2 + H2O. It participates in amino-acid biosynthesis; L-tryptophan biosynthesis; L-tryptophan from chorismate: step 4/5. The chain is Indole-3-glycerol phosphate synthase from Metallosphaera sedula (strain ATCC 51363 / DSM 5348 / JCM 9185 / NBRC 15509 / TH2).